The sequence spans 259 residues: MFFVLSPAKNLNEKDPCPVSEFTQPDLLAESEILMRQLRELAPQQIAELMHVSDKIALLNAERNAAWHTPFTPENAKQAVFMFNGDVYEGMDANTLNTNQIQYLQNHVRLLSGLYGLMRPLDLMQPYRLEMGTAFANLRGKNLYEFWGDIITNLLNDTLAQAGSNTLVNLASQEYFKSVNTKKLRARLITPIFKDEKNGKYKIISFYAKRARGLMVRYAAEHNITDPEMLKNFNYEGYAFNDAASNESEWVFMRSEQIK.

It belongs to the UPF0246 family.

This chain is UPF0246 protein NGK_0633, found in Neisseria gonorrhoeae (strain NCCP11945).